The sequence spans 172 residues: Ribosome maturation factor RimM (172 aa).

One can recognise a PRC barrel domain in the interval 96–169 (EGYFYHFQLQ…RMEIKLLPGL (74 aa)).

It belongs to the RimM family. In terms of assembly, binds ribosomal protein uS19.

It is found in the cytoplasm. In terms of biological role, an accessory protein needed during the final step in the assembly of 30S ribosomal subunit, possibly for assembly of the head region. Essential for efficient processing of 16S rRNA. May be needed both before and after RbfA during the maturation of 16S rRNA. It has affinity for free ribosomal 30S subunits but not for 70S ribosomes. In Syntrophomonas wolfei subsp. wolfei (strain DSM 2245B / Goettingen), this protein is Ribosome maturation factor RimM.